Consider the following 334-residue polypeptide: GTPase Obg (334 aa).

The Obg domain maps to methionine 1–leucine 159. The OBG-type G domain maps to alanine 160–histidine 331. GTP-binding positions include glycine 166 to serine 173, phenylalanine 191 to tyrosine 195, aspartate 212 to glycine 215, asparagine 282 to aspartate 285, and serine 312 to alanine 314. Positions 173 and 193 each coordinate Mg(2+).

The protein belongs to the TRAFAC class OBG-HflX-like GTPase superfamily. OBG GTPase family. In terms of assembly, monomer. Mg(2+) is required as a cofactor.

The protein resides in the cytoplasm. Functionally, an essential GTPase which binds GTP, GDP and possibly (p)ppGpp with moderate affinity, with high nucleotide exchange rates and a fairly low GTP hydrolysis rate. Plays a role in control of the cell cycle, stress response, ribosome biogenesis and in those bacteria that undergo differentiation, in morphogenesis control. The polypeptide is GTPase Obg (Francisella philomiragia subsp. philomiragia (strain ATCC 25017 / CCUG 19701 / FSC 153 / O#319-036)).